Here is a 155-residue protein sequence, read N- to C-terminus: S-ribosylhomocysteine lyase (155 aa).

The Fe cation site is built by H57, H61, and C124.

It belongs to the LuxS family. Homodimer. Fe cation serves as cofactor.

The enzyme catalyses S-(5-deoxy-D-ribos-5-yl)-L-homocysteine = (S)-4,5-dihydroxypentane-2,3-dione + L-homocysteine. Its function is as follows. Involved in the synthesis of autoinducer 2 (AI-2) which is secreted by bacteria and is used to communicate both the cell density and the metabolic potential of the environment. The regulation of gene expression in response to changes in cell density is called quorum sensing. Catalyzes the transformation of S-ribosylhomocysteine (RHC) to homocysteine (HC) and 4,5-dihydroxy-2,3-pentadione (DPD). The protein is S-ribosylhomocysteine lyase of Listeria monocytogenes serovar 1/2a (strain ATCC BAA-679 / EGD-e).